We begin with the raw amino-acid sequence, 187 residues long: Insulin-like growth factor 2 (187 aa).

An N-terminal signal peptide occupies residues 1 to 23 (MCAARQILLLLLAFLAYALDSAA). Residues 25–51 (YGTAETLCGGELVDTLQFVCGDRGFYF) form a b region. 3 cysteine pairs are disulfide-bonded: C32–C71, C44–C84, and C70–C75. A c region spans residues 52 to 64 (SRPVGRNNRRINR). The a stretch occupies residues 64 to 85 (RGIVEECCFRSCDLALLETYCA). Positions 86–91 (KSVKSE) are d. A propeptide spans 92 to 187 (RDLSATSLAG…ASPEATGPQE (96 aa)) (e peptide). The disordered stretch occupies residues 162 to 187 (HRPLISLPSQRPPAPRASPEATGPQE).

The protein belongs to the insulin family.

The protein resides in the secreted. The insulin-like growth factors, isolated from plasma, are structurally and functionally related to insulin but have a much higher growth-promoting activity. Acts as a ligand for integrin which is required for IGF2 signaling. The chain is Insulin-like growth factor 2 from Gallus gallus (Chicken).